We begin with the raw amino-acid sequence, 930 residues long: Isoleucine--tRNA ligase (930 aa).

The 'HIGH' region signature appears at 57–67 (PYANGNIHVGH). Glu554 lines the L-isoleucyl-5'-AMP pocket. Positions 595–599 (KMSKS) match the 'KMSKS' region motif. Residue Lys598 coordinates ATP. Residues Cys888, Cys891, Cys908, and Cys911 each contribute to the Zn(2+) site.

This sequence belongs to the class-I aminoacyl-tRNA synthetase family. IleS type 1 subfamily. Monomer. Requires Zn(2+) as cofactor.

The protein localises to the cytoplasm. The enzyme catalyses tRNA(Ile) + L-isoleucine + ATP = L-isoleucyl-tRNA(Ile) + AMP + diphosphate. Functionally, catalyzes the attachment of isoleucine to tRNA(Ile). As IleRS can inadvertently accommodate and process structurally similar amino acids such as valine, to avoid such errors it has two additional distinct tRNA(Ile)-dependent editing activities. One activity is designated as 'pretransfer' editing and involves the hydrolysis of activated Val-AMP. The other activity is designated 'posttransfer' editing and involves deacylation of mischarged Val-tRNA(Ile). This chain is Isoleucine--tRNA ligase, found in Streptococcus pneumoniae (strain JJA).